A 663-amino-acid polypeptide reads, in one-letter code: 4-hydroxy-3-methylbut-2-en-1-yl diphosphate synthase (flavodoxin) (663 aa).

Positions 568, 571, 602, and 609 each coordinate [4Fe-4S] cluster.

Belongs to the IspG family. It depends on [4Fe-4S] cluster as a cofactor.

The enzyme catalyses (2E)-4-hydroxy-3-methylbut-2-enyl diphosphate + oxidized [flavodoxin] + H2O + 2 H(+) = 2-C-methyl-D-erythritol 2,4-cyclic diphosphate + reduced [flavodoxin]. It participates in isoprenoid biosynthesis; isopentenyl diphosphate biosynthesis via DXP pathway; isopentenyl diphosphate from 1-deoxy-D-xylulose 5-phosphate: step 5/6. Converts 2C-methyl-D-erythritol 2,4-cyclodiphosphate (ME-2,4cPP) into 1-hydroxy-2-methyl-2-(E)-butenyl 4-diphosphate. The polypeptide is 4-hydroxy-3-methylbut-2-en-1-yl diphosphate synthase (flavodoxin) (Leptospira borgpetersenii serovar Hardjo-bovis (strain JB197)).